The following is a 513-amino-acid chain: ATP synthase subunit alpha (513 aa).

Position 169–176 (169–176) interacts with ATP; sequence GDRQTGKT.

Belongs to the ATPase alpha/beta chains family. In terms of assembly, F-type ATPases have 2 components, CF(1) - the catalytic core - and CF(0) - the membrane proton channel. CF(1) has five subunits: alpha(3), beta(3), gamma(1), delta(1), epsilon(1). CF(0) has three main subunits: a(1), b(2) and c(9-12). The alpha and beta chains form an alternating ring which encloses part of the gamma chain. CF(1) is attached to CF(0) by a central stalk formed by the gamma and epsilon chains, while a peripheral stalk is formed by the delta and b chains.

Its subcellular location is the cell inner membrane. The enzyme catalyses ATP + H2O + 4 H(+)(in) = ADP + phosphate + 5 H(+)(out). Its function is as follows. Produces ATP from ADP in the presence of a proton gradient across the membrane. The alpha chain is a regulatory subunit. The polypeptide is ATP synthase subunit alpha (Shewanella putrefaciens (strain CN-32 / ATCC BAA-453)).